Reading from the N-terminus, the 198-residue chain is Beta-crystallin A1 (198 aa).

Positions 1 to 13 (MLYLVLFLVPFNS) are N-terminal arm. Beta/gamma crystallin 'Greek key' domains are found at residues 14–53 (IQIT…KVEC) and 54–100 (GAWI…RPIC). Residues C65 and C100 each carry the S-glutathionyl cysteine; alternate modification. 2 positions are modified to S-methylcysteine; alternate: C65 and C100. Residues 101–106 (SANHKE) are connecting peptide. Beta/gamma crystallin 'Greek key' domains are found at residues 107–148 (SKIT…KIQC) and 149–197 (GAWV…RRIQ).

It belongs to the beta/gamma-crystallin family. In terms of assembly, homo/heterodimer, or complexes of higher-order. The structure of beta-crystallin oligomers seems to be stabilized through interactions between the N-terminal arms. Interacts with CRYBA1.

Functionally, crystallins are the dominant structural components of the vertebrate eye lens. In Mus musculus (Mouse), this protein is Beta-crystallin A1.